We begin with the raw amino-acid sequence, 529 residues long: Type I restriction enzyme EcoKI methylase subunit (529 aa).

S-adenosyl-L-methionine contacts are provided by residues 148–153, 178–180, and glutamate 216; these read QYFTPR and TAG.

The protein belongs to the N(4)/N(6)-methyltransferase family. The type I restriction/modification system is composed of three polypeptides R, M and S. The restriction enzyme has stoichiometry R(2)M(2)S(1). The methyltransferase is composed of M(2)S(1). In terms of assembly, (Microbial infection) Interacts with Escherichia phage T7 protein Ocr; this interaction leads to the inhibition of the methyltransferase restriction enzyme M.EcoKI composed of M(2)S(1).

The catalysed reaction is a 2'-deoxyadenosine in DNA + S-adenosyl-L-methionine = an N(6)-methyl-2'-deoxyadenosine in DNA + S-adenosyl-L-homocysteine + H(+). Its function is as follows. The subtype gamma methyltransferase (M) subunit of a type I restriction enzyme. The M and S subunits together form a methyltransferase (MTase) that methylates A-2 on the top and A-3 on the bottom strand of the sequence 5'-AACN(6)GTGC-3'. In the presence of the R subunit the complex can also act as an endonuclease, binding to the same target sequence but cutting the DNA some distance from this site. Whether the DNA is cut or modified depends on the methylation state of the target sequence. When the target site is unmodified, the DNA is cut. When the target site is hemimethylated, the complex acts as a maintenance MTase modifying the DNA so that both strands become methylated. After locating a non-methylated recognition site, the enzyme complex serves as a molecular motor that translocates DNA in an ATP-dependent manner until a collision occurs that triggers cleavage. The chain is Type I restriction enzyme EcoKI methylase subunit from Escherichia coli (strain K12).